Reading from the N-terminus, the 255-residue chain is Probable iron chelatin transport ATP-binding protein jhp_0821 (255 aa).

Positions 3 to 240 (LEVKNLSFKY…HNLSALYDTP (238 aa)) constitute an ABC transporter domain. An ATP-binding site is contributed by 35–42 (APNGSGKT).

The protein belongs to the ABC transporter superfamily.

The protein localises to the cell inner membrane. Its function is as follows. Part of a binding-protein-dependent transport system for an iron chelatin. Probably responsible for energy coupling to the transport system (Potential). The sequence is that of Probable iron chelatin transport ATP-binding protein jhp_0821 from Helicobacter pylori (strain J99 / ATCC 700824) (Campylobacter pylori J99).